The sequence spans 700 residues: Methionine--tRNA ligase (700 aa).

The short motif at 14 to 24 is the 'HIGH' region element; the sequence is PYANGPVHLGH. Residues cysteine 146, cysteine 149, cysteine 159, and cysteine 162 each contribute to the Zn(2+) site. The 'KMSKS' region motif lies at 344 to 348; it reads KFSKS. Position 347 (lysine 347) interacts with ATP. The tRNA-binding domain occupies 599-700; it reads DFLKVDLRVA…GEEINGRQIQ (102 aa).

It belongs to the class-I aminoacyl-tRNA synthetase family. MetG type 1 subfamily. Homodimer. Zn(2+) serves as cofactor.

The protein localises to the cytoplasm. It catalyses the reaction tRNA(Met) + L-methionine + ATP = L-methionyl-tRNA(Met) + AMP + diphosphate. Functionally, is required not only for elongation of protein synthesis but also for the initiation of all mRNA translation through initiator tRNA(fMet) aminoacylation. In Pelodictyon phaeoclathratiforme (strain DSM 5477 / BU-1), this protein is Methionine--tRNA ligase.